A 185-amino-acid polypeptide reads, in one-letter code: Elongation factor P (185 aa).

It belongs to the elongation factor P family.

Its subcellular location is the cytoplasm. It participates in protein biosynthesis; polypeptide chain elongation. In terms of biological role, involved in peptide bond synthesis. Stimulates efficient translation and peptide-bond synthesis on native or reconstituted 70S ribosomes in vitro. Probably functions indirectly by altering the affinity of the ribosome for aminoacyl-tRNA, thus increasing their reactivity as acceptors for peptidyl transferase. This is Elongation factor P from Dechloromonas aromatica (strain RCB).